Reading from the N-terminus, the 541-residue chain is Atlastin (541 aa).

The Cytoplasmic portion of the chain corresponds to 1–424; that stretch reads MGGSAVQVIN…NIFKAARTPA (424 aa). Residues 35 to 284 form the GB1/RHD3-type G domain; the sequence is DRFVCVVSVA…LVPMLLAPDN (250 aa). GDP contacts are provided by arginine 48, lysine 49, glycine 50, lysine 51, and serine 52. GTP contacts are provided by arginine 48, lysine 49, glycine 50, lysine 51, serine 52, and phenylalanine 53. Position 52 (serine 52) interacts with Mg(2+). Aspartate 121 lines the Mg(2+) pocket. GDP-binding residues include arginine 192, aspartate 193, and valine 251. Residues arginine 192, aspartate 193, and valine 251 each contribute to the GTP site. The segment at 322–413 is 3HB (three-helix bundle) domain; the sequence is MLVATAEANH…FTNYQAHNES (92 aa). A linker region spans residues 414–422; the sequence is KNIFKAART. Residues 425 to 445 form a helical membrane-spanning segment; it reads VYFACAVIMYILSGIFGLVGL. Over 446-448 the chain is Lumenal; the sequence is YTF. The chain crosses the membrane as a helical span at residues 449–469; that stretch reads ANFCNLVMGVALLTLALWAYI. The Cytoplasmic portion of the chain corresponds to 470 to 541; sequence RYSGELSDFG…NASNGKVKRS (72 aa). Threonine 514 carries the post-translational modification Phosphothreonine.

It belongs to the TRAFAC class dynamin-like GTPase superfamily. GB1/RHD3 GTPase family. GB1 subfamily. In terms of assembly, monomeric and homodimeric. The homodimer, transiently formed by two molecules on opposing membranes, is the active form mediating ER membrane fusion. Interacts with spas; interaction may regulate microtubule dynamics. As to expression, ubiquitously expressed.

The protein localises to the endoplasmic reticulum membrane. Its subcellular location is the golgi apparatus membrane. It carries out the reaction GTP + H2O = GDP + phosphate + H(+). Functionally, membrane-anchored GTPase that mediates the GTP-dependent fusion of endoplasmic reticulum (ER) membranes, maintaining the continuous ER network. It facilitates the formation of three-way junctions where ER tubules intersect. Two atlastin-1 on neighboring ER tubules bind GTP and form loose homodimers through the GB1/RHD3-type G domains and 3HB regions. Upon GTP hydrolysis, the 3HB regions tighten, pulling the membranes together to drive their fusion. After fusion, the homodimer disassembles upon release of inorganic phosphate (Pi). Subsequently, GDP dissociates, resetting the monomers to a conformation ready for a new fusion cycle. May also regulate more or less directly Golgi biogenesis. May also regulate microtubule polymerization and Golgi biogenesis. Required for dopaminergic neurons survival and the growth of muscles and synapses at neuromuscular junctions. This chain is Atlastin (atl), found in Drosophila melanogaster (Fruit fly).